The following is a 189-amino-acid chain: Xanthine phosphoribosyltransferase (189 aa).

2 residues coordinate xanthine: L20 and N27. 128–132 contributes to the 5-phospho-alpha-D-ribose 1-diphosphate binding site; the sequence is ANGEA. K156 contacts xanthine.

This sequence belongs to the purine/pyrimidine phosphoribosyltransferase family. Xpt subfamily. As to quaternary structure, homodimer.

It is found in the cytoplasm. The catalysed reaction is XMP + diphosphate = xanthine + 5-phospho-alpha-D-ribose 1-diphosphate. It participates in purine metabolism; XMP biosynthesis via salvage pathway; XMP from xanthine: step 1/1. Its function is as follows. Converts the preformed base xanthine, a product of nucleic acid breakdown, to xanthosine 5'-monophosphate (XMP), so it can be reused for RNA or DNA synthesis. The protein is Xanthine phosphoribosyltransferase of Clostridium acetobutylicum (strain ATCC 824 / DSM 792 / JCM 1419 / IAM 19013 / LMG 5710 / NBRC 13948 / NRRL B-527 / VKM B-1787 / 2291 / W).